A 232-amino-acid chain; its full sequence is Phosphatidylserine decarboxylase proenzyme (232 aa).

S190 functions as the Schiff-base intermediate with substrate; via pyruvic acid in the catalytic mechanism. Position 190 is a pyruvic acid (Ser); by autocatalysis (S190).

The protein belongs to the phosphatidylserine decarboxylase family. PSD-A subfamily. In terms of assembly, heterodimer of a large membrane-associated beta subunit and a small pyruvoyl-containing alpha subunit. Pyruvate is required as a cofactor. Post-translationally, is synthesized initially as an inactive proenzyme. Formation of the active enzyme involves a self-maturation process in which the active site pyruvoyl group is generated from an internal serine residue via an autocatalytic post-translational modification. Two non-identical subunits are generated from the proenzyme in this reaction, and the pyruvate is formed at the N-terminus of the alpha chain, which is derived from the carboxyl end of the proenzyme. The post-translation cleavage follows an unusual pathway, termed non-hydrolytic serinolysis, in which the side chain hydroxyl group of the serine supplies its oxygen atom to form the C-terminus of the beta chain, while the remainder of the serine residue undergoes an oxidative deamination to produce ammonia and the pyruvoyl prosthetic group on the alpha chain.

It is found in the cell membrane. It catalyses the reaction a 1,2-diacyl-sn-glycero-3-phospho-L-serine + H(+) = a 1,2-diacyl-sn-glycero-3-phosphoethanolamine + CO2. It functions in the pathway phospholipid metabolism; phosphatidylethanolamine biosynthesis; phosphatidylethanolamine from CDP-diacylglycerol: step 2/2. Its function is as follows. Catalyzes the formation of phosphatidylethanolamine (PtdEtn) from phosphatidylserine (PtdSer). The polypeptide is Phosphatidylserine decarboxylase proenzyme (Brucella abortus (strain S19)).